Here is a 269-residue protein sequence, read N- to C-terminus: Magnetosome protein MamX (269 aa).

The Cytoplasmic portion of the chain corresponds to 1 to 10; it reads MNTKAVAHPD. The helical transmembrane segment at 11-31 threads the bilayer; it reads IAVWIMALGIAFSMALVLTAL. The Lumenal segment spans residues 32-269; the sequence is FNANPWEDHT…NVGGVDAEER (238 aa). The MCR (magnetochrome) 1 signature appears at 48–71; sequence IVAGMAAPHRDGREKMVCSSCHIV. 6 residues coordinate heme: Cys-65, Cys-68, His-69, Cys-104, Cys-107, and His-108. The short motif at 87-110 is the MCR 2 element; the sequence is IVEGTPAPHVDGREKMACASCHTI.

This sequence belongs to the magnetosome MamX family. In terms of assembly, probably interacts with FtsZ-like and MamY proteins. Requires heme as cofactor.

It is found in the magnetosome membrane. Its function is as follows. Required for correct biomineralization of the magnetosome, maybe via redox control. May function with MamY, MamZ amd Mms6 in biomineralization. This Magnetospirillum gryphiswaldense (strain DSM 6361 / JCM 21280 / NBRC 15271 / MSR-1) protein is Magnetosome protein MamX.